Here is a 130-residue protein sequence, read N- to C-terminus: ATP synthase epsilon chain (130 aa).

Belongs to the ATPase epsilon chain family. In terms of assembly, F-type ATPases have 2 components, CF(1) - the catalytic core - and CF(0) - the membrane proton channel. CF(1) has five subunits: alpha(3), beta(3), gamma(1), delta(1), epsilon(1). CF(0) has three main subunits: a, b and c.

The protein resides in the cell inner membrane. Produces ATP from ADP in the presence of a proton gradient across the membrane. The sequence is that of ATP synthase epsilon chain from Pelagibacter ubique (strain HTCC1062).